The following is a 115-amino-acid chain: Large ribosomal subunit protein bL19 (115 aa).

Belongs to the bacterial ribosomal protein bL19 family.

Its function is as follows. This protein is located at the 30S-50S ribosomal subunit interface and may play a role in the structure and function of the aminoacyl-tRNA binding site. This Finegoldia magna (strain ATCC 29328 / DSM 20472 / WAL 2508) (Peptostreptococcus magnus) protein is Large ribosomal subunit protein bL19.